A 1427-amino-acid polypeptide reads, in one-letter code: MNQLTNFMNPVAKPETFDMIKIGIASPERIRSWSFGEIKKPETINYRTFKPERDGLFCARIFGPIKDYECLCGKYKRMKYKGIVCEKCGVEVTVTKVRRERMGHIELAAPVAHIWFLKSLPSRIGLLLDMQLKQLERVLYFEAYIVLEPGLTPLEKFQLLTEDELLDAQDEYGEDAFSAGIGAEAIRTLLENLDLEQERTDLMEELATTKSELKPKKIIKRLKVVESFIESGNRPEWMILEVVPVIPPELRPLVPLDGGRFATSDLNDLYRRVINRNNRLKRLMELRAPDIIVRNEKRMLQEAVDALFDNGRRGRTITGANKRPLKSLSDMLKGKQGRFRQNLLGKRVDYSGRSVIVTGPELKLHQCGLPKKMALELFKPFIYARLDAKGLSMTLKQAKKWVEKERKEVWDILDEVIREHPVLLNRAPTLHRLGIQAFEPVLIEGKAIQLHPLVCAAFNADFDGDQMAVHVPLSLEAQLEARVLMMSTNNILSPANGKPIIVPSQDMVLGLYYLSLEREGEPGEGMLLADMAEVHQALHIGAVTLHSKIISRVPQTDEKGNEYLKRFETTPGRMLIGECLPKSHTVPFDVVNRLLTKKEIGDVIDQVYRHTGQKETVLFADAIMALGFRHAFKAGISFGKDDMIIPASKEQLVDETRSLVKDFEQQYQDGLITQQEKYNKAIDAWSQCGDKVANAMMDEIRATPKLPDGRLAPINSIYMMAHSGARGSQAQMKQLAGMRGLMAKPSGEIIETPIISNFKEGLTVLEYFNSTHGARKGLADTALKTANSGYLTRRLVDVSQDCVVIEEDCGTTRGMEMRAIIQGGSTIASLGERILGRTTLEDVVDKDGNVIAPVGTLLDEATTQRIEEAEVQSVKIRSPLVCEATLGVCGKCYGRDLARGTPVNIGEAVGVIAAQSIGEPGTQLTMRTFHIGGAAQVNEQSNVEAISDGTIEYRDMATIVDQRGRRLALSRSGEIAIIDSEGRERASHKLPYGAQIMHKDGEKVKKGDRIAEWDPFTMPLITEKQGVVKYQDLIDGKTLTEQVDEATGIAQRVVIEYRAAGRSKKEDLQPRITLLDDASGEAARYLLAVGTMISVEDGQTVQAGDVLARVSREASKTRDITGGLPRVAELFEARIPKDNSVIAKISGRIEFVKDYKAKRKIAIVPEEGDPIEYLIPKSKVLEVQEGDMVKRGDALISGSPNPHDILDVMGVEALAEYLVAEIQEVYRLQGVKINDKHIEVIVRQMLQKVEITDGGDTTLLPGEQLDYLEMMEYNAKLPKNGKPAEGRPVLLGITKASLQTRSFVSAASFQETTRVLTEASVQGKVDSLQGLKENVIVGRLIPAGTGAAMNRVRVTASSKDAALRAAMRVANQEHLIAPRTAAEEHAAELAQGPEAAIGDDPLGKVQGEDFTTDDVMVEERPEGASEE.

Zn(2+)-binding residues include Cys-70, Cys-72, Cys-85, and Cys-88. Asp-461, Asp-463, and Asp-465 together coordinate Mg(2+). Zn(2+) is bound by residues Cys-809, Cys-882, Cys-889, and Cys-892. A disordered region spans residues 1394–1427 (EAAIGDDPLGKVQGEDFTTDDVMVEERPEGASEE). The segment covering 1417-1427 (VEERPEGASEE) has biased composition (basic and acidic residues).

The protein belongs to the RNA polymerase beta' chain family. In terms of assembly, the RNAP catalytic core consists of 2 alpha, 1 beta, 1 beta' and 1 omega subunit. When a sigma factor is associated with the core the holoenzyme is formed, which can initiate transcription. The cofactor is Mg(2+). It depends on Zn(2+) as a cofactor.

The catalysed reaction is RNA(n) + a ribonucleoside 5'-triphosphate = RNA(n+1) + diphosphate. DNA-dependent RNA polymerase catalyzes the transcription of DNA into RNA using the four ribonucleoside triphosphates as substrates. This is DNA-directed RNA polymerase subunit beta' from Sphingopyxis alaskensis (strain DSM 13593 / LMG 18877 / RB2256) (Sphingomonas alaskensis).